We begin with the raw amino-acid sequence, 281 residues long: Ermin (281 aa).

Composition is skewed to polar residues over residues 1–12 (MTDTPETLSGTE), 21–31 (NGQQPSSQTRQ), and 135–147 (AQQQ…DAST). 3 disordered regions span residues 1–80 (MTDT…KILN), 110–147 (REGH…DAST), and 167–248 (KCDE…GDIA). Residues 169-197 (DEEEEEEEEVWNEEINEEDVDECAEEEDE) show a composition bias toward acidic residues. The span at 198 to 223 (VRVIEFKRKHREGSPLKEESLAREDS) shows a compositional bias: basic and acidic residues. A phosphoserine mark is found at Ser211, Ser223, Ser227, and Ser230. Phosphothreonine is present on Thr234. The tract at residues 262 to 281 (KIRKGNTKQRIDEFESMMHL) is binds actin.

As to quaternary structure, binds actin. As to expression, brain and spinal cord. Exclusively expressed by the oligodendrocytes. Appears at a late stage during myelination, and in the mature nerves, it is localized to the outer cytoplasmic lip of the myelin sheath and the paranodal loops.

It localises to the cytoplasm. The protein resides in the cytoskeleton. Plays a role in cytoskeletal rearrangements during the late wrapping and/or compaction phases of myelinogenesis as well as in maintenance and stability of myelin sheath in the adult. May play an important role in late-stage oligodendroglia maturation, myelin/Ranvier node formation during CNS development, and in the maintenance and plasticity of related structures in the mature CNS. The chain is Ermin (Ermn) from Mus musculus (Mouse).